Here is a 296-residue protein sequence, read N- to C-terminus: MEYKDIATPSRTRALLDQYGFNFKKSLGQNFLIDVNIINKIIEASHIDCTTGVIEVGPGMGSLTEQLAKNAKKVMAFEIDQRLIPVLKDTLSPYDNVTIINEDILKADIAKAVDTHLQDCDKIMVVANLPYYITTPILLNLMQQDVPIDGFVVMMQKEVGERLNAQVGTKAYGSLSIVAQYYTETSKVLTVPKTVFMPPPNVDSIVVKLMQRQEPLVQVDDEEGFFKLAKAAFAQRRKTINNNYQNFFKDGKKNKETIRQWLESAGIDPKRRGETLTIQDFATLYEQKKKFSELTN.

S-adenosyl-L-methionine is bound by residues Asn30, Leu32, Gly57, Glu78, Asp103, and Asn128.

The protein belongs to the class I-like SAM-binding methyltransferase superfamily. rRNA adenine N(6)-methyltransferase family. RsmA subfamily.

It localises to the cytoplasm. The enzyme catalyses adenosine(1518)/adenosine(1519) in 16S rRNA + 4 S-adenosyl-L-methionine = N(6)-dimethyladenosine(1518)/N(6)-dimethyladenosine(1519) in 16S rRNA + 4 S-adenosyl-L-homocysteine + 4 H(+). Specifically dimethylates two adjacent adenosines (A1518 and A1519) in the loop of a conserved hairpin near the 3'-end of 16S rRNA in the 30S particle. May play a critical role in biogenesis of 30S subunits. The chain is Ribosomal RNA small subunit methyltransferase A from Staphylococcus epidermidis (strain ATCC 35984 / DSM 28319 / BCRC 17069 / CCUG 31568 / BM 3577 / RP62A).